Here is a 137-residue protein sequence, read N- to C-terminus: Putative pre-16S rRNA nuclease (137 aa).

It belongs to the YqgF nuclease family.

Its subcellular location is the cytoplasm. Functionally, could be a nuclease involved in processing of the 5'-end of pre-16S rRNA. In Anaeromyxobacter dehalogenans (strain 2CP-C), this protein is Putative pre-16S rRNA nuclease.